The following is a 335-amino-acid chain: Serpentine receptor class XA 10 (335 aa).

Residues 1 to 10 (MDVDAAVVKR) lie on the Extracellular side of the membrane. The chain crosses the membrane as a helical span at residues 11–31 (IALWVYETCSVFNLFYCITLS). The Cytoplasmic segment spans residues 32–46 (LAIKTSKNNALPATY). A helical membrane pass occupies residues 47–67 (IYNMAISNALLVIFGIMVYIL). The Extracellular portion of the chain corresponds to 68-82 (PYYMSDKTYKTYRDS). A helical membrane pass occupies residues 83 to 103 (IGAMISVGVTFNYLHPMLTLI). Residues 104–126 (LMTINRIAVVVSMQASQLFTSSK) are Cytoplasmic-facing. Residues 127–147 (IWLYTSFHMTANFACLIIPYL) form a helical membrane-spanning segment. Residues 148–177 (SECRINYDIRKVGFISECAPDRHQITTFSN) are Extracellular-facing. Residues 178 to 198 (YYSVFFPFVAFFFNVLVIINF) form a helical membrane-spanning segment. The Cytoplasmic segment spans residues 199–238 (KLQRSPTYTKIKNMFRRGNGDQFTSMPSDVLKAKKKTERM). The helical transmembrane segment at 239–259 (LMIQAFITAFYLSVYELTSLV) threads the bilayer. At 260–276 (LRVVPELFGNLSLDGKL) the chain is on the extracellular side. A helical transmembrane segment spans residues 277–297 (AFTYFRLAQVPCHVFLVYFIF). Residues 298–319 (TPVTRKIYMDFVRERVFCMKPA) are Cytoplasmic-facing.

This sequence belongs to the nematode receptor-like protein srxa family.

The protein localises to the membrane. In Caenorhabditis elegans, this protein is Serpentine receptor class XA 10 (srxa-10).